A 418-amino-acid chain; its full sequence is NADH-quinone oxidoreductase subunit D (418 aa).

It belongs to the complex I 49 kDa subunit family. As to quaternary structure, NDH-1 is composed of 14 different subunits. Subunits NuoB, C, D, E, F, and G constitute the peripheral sector of the complex.

It localises to the cell inner membrane. It catalyses the reaction a quinone + NADH + 5 H(+)(in) = a quinol + NAD(+) + 4 H(+)(out). Its function is as follows. NDH-1 shuttles electrons from NADH, via FMN and iron-sulfur (Fe-S) centers, to quinones in the respiratory chain. The immediate electron acceptor for the enzyme in this species is believed to be ubiquinone. Couples the redox reaction to proton translocation (for every two electrons transferred, four hydrogen ions are translocated across the cytoplasmic membrane), and thus conserves the redox energy in a proton gradient. In Neisseria meningitidis serogroup B (strain ATCC BAA-335 / MC58), this protein is NADH-quinone oxidoreductase subunit D.